The following is a 412-amino-acid chain: Gamma-glutamyl phosphate reductase (412 aa).

This sequence belongs to the gamma-glutamyl phosphate reductase family.

The protein localises to the cytoplasm. It carries out the reaction L-glutamate 5-semialdehyde + phosphate + NADP(+) = L-glutamyl 5-phosphate + NADPH + H(+). The protein operates within amino-acid biosynthesis; L-proline biosynthesis; L-glutamate 5-semialdehyde from L-glutamate: step 2/2. In terms of biological role, catalyzes the NADPH-dependent reduction of L-glutamate 5-phosphate into L-glutamate 5-semialdehyde and phosphate. The product spontaneously undergoes cyclization to form 1-pyrroline-5-carboxylate. The polypeptide is Gamma-glutamyl phosphate reductase (Aliarcobacter butzleri (strain RM4018) (Arcobacter butzleri)).